The chain runs to 308 residues: Aspartate carbamoyltransferase catalytic subunit (308 aa).

Positions 55 and 56 each coordinate carbamoyl phosphate. Residue Lys-85 coordinates L-aspartate. Carbamoyl phosphate contacts are provided by Arg-106, His-135, and Gln-138. L-aspartate is bound by residues Arg-168 and Arg-229. Carbamoyl phosphate is bound by residues Leu-267 and Pro-268.

The protein belongs to the aspartate/ornithine carbamoyltransferase superfamily. ATCase family. In terms of assembly, heterododecamer (2C3:3R2) of six catalytic PyrB chains organized as two trimers (C3), and six regulatory PyrI chains organized as three dimers (R2).

The enzyme catalyses carbamoyl phosphate + L-aspartate = N-carbamoyl-L-aspartate + phosphate + H(+). It functions in the pathway pyrimidine metabolism; UMP biosynthesis via de novo pathway; (S)-dihydroorotate from bicarbonate: step 2/3. In terms of biological role, catalyzes the condensation of carbamoyl phosphate and aspartate to form carbamoyl aspartate and inorganic phosphate, the committed step in the de novo pyrimidine nucleotide biosynthesis pathway. The protein is Aspartate carbamoyltransferase catalytic subunit of Laribacter hongkongensis (strain HLHK9).